The chain runs to 466 residues: Putative chitinase (466 aa).

An N-terminal signal peptide occupies residues 1–17 (MYLTIWLVSILALGTWG). The region spanning 20–380 (FNRFCHYNSW…MAVIHGLNAY (361 aa)) is the GH18 domain. Cysteines 24 and 49 form a disulfide. Glu141 (proton donor) is an active-site residue. Positions 408-442 (NYRRRNQQEKVAEMEQRIRHLEQELQQSMGNMAYE) form a coiled coil.

The protein belongs to the glycosyl hydrolase 18 family. As to expression, prismatic layer of shell (at protein level). Expressed primarily in the mantle with highest level in the mantle edge and lower level in the mantle pallium.

The protein resides in the secreted. It carries out the reaction Random endo-hydrolysis of N-acetyl-beta-D-glucosaminide (1-&gt;4)-beta-linkages in chitin and chitodextrins.. In Pinctada maxima (Silver-lipped pearl oyster), this protein is Putative chitinase.